The chain runs to 317 residues: MSKDDPINSIFFEHQEAALCAQHALNMLLQDALYKWQDLRDLAIQMDKMEQQILGNANPTPGRSENMNESGYFSIQVLEKALETFSLKLTNIENPAMVDYKNNPLTARAYICNLREHWFVLRKFGNQWFELNSVNRGPKLLSDTYVSMFLHQVSSEGYSIFVVQGVLPRSDADDLISLCPVVPPKVTPKKEQKLEKVMTKFFNTVGKRLGGGSGAPPDSQEEKDLAIAFAMSMETKDGSEVSRSSAEIDEENLRKAIELSQAPGPSEPAEIPLLTRSRSSTPPGASEPFSNAEQQRRDRQKFLERFEKKKEERNDEK.

Residues 7–178 enclose the Josephin domain; the sequence is INSIFFEHQE…RSDADDLISL (172 aa). Residue Cys-20 is the Nucleophile of the active site. Residue His-117 is the Proton acceptor of the active site. Residue Asn-132 is part of the active site. 2 UIM domains span residues 219 to 239 and 247 to 264; these read SQEEKDLAIAFAMSMETKDGS and EIDEENLRKAIELSQAPG. Residues 254-317 are disordered; the sequence is RKAIELSQAP…KKKEERNDEK (64 aa). Residues 276 to 293 are compositionally biased toward polar residues; that stretch reads RSRSSTPPGASEPFSNAE. A compositionally biased stretch (basic and acidic residues) spans 294–317; that stretch reads QQRRDRQKFLERFEKKKEERNDEK. The interaction with cdc-48.1 and cdc-48.2 stretch occupies residues 296 to 299; sequence RRDR.

In terms of assembly, forms a complex composed of deubiquitinating enzyme atx-3, adapter ubxn-5 and cdc-48.1. Forms a complex composed of deubiquitinating enzyme atx-3, E4 ubiquitin-protein ligase ufd-2 and cdc-48.1. Interacts (via RRDR motif) with cdc-48.1 (via N-terminus) and cdc-48.2 (via N-terminus); the interaction with cdc-48.1 is not required for atx-3 enzymatic activity. Interacts (via C-terminus) with ubxn-5. May interact with ned-8. As to expression, expressed in germline (at protein level). Expressed in spermatheca, pharynx, dorsal and ventral cords, some head neurons, hypodermis, body wall muscles and coelomocytes.

The protein resides in the cytoplasm. It localises to the nucleus. It is found in the nucleolus. It carries out the reaction Thiol-dependent hydrolysis of ester, thioester, amide, peptide and isopeptide bonds formed by the C-terminal Gly of ubiquitin (a 76-residue protein attached to proteins as an intracellular targeting signal).. Acts as a chain editing deubiquitinating enzyme that binds and cleaves 'Lys-48'-linked polyubiquitin chains, with a preference for chains containing four or more ubiquitin molecules thereby modulating protein degradation by the ubiquitin-proteasome pathway. Probably by regulating the IGF-1-insulin-like pathway, regulates lifespan. Regulates germline DNA double-strand-break repair and apoptosis in response to DNA damage by recruiting E4 ubiquitin-protein ligase ufd-2 to DNA repair foci. Interacts with key regulators of transcription and represses transcription. Acts as a histone-binding protein that regulates transcription. This chain is Ataxin-3 homolog (atx-3), found in Caenorhabditis elegans.